We begin with the raw amino-acid sequence, 49 residues long: Large ribosomal subunit protein bL33D (49 aa).

Belongs to the bacterial ribosomal protein bL33 family.

The polypeptide is Large ribosomal subunit protein bL33D (rpmG4) (Enterococcus faecalis (strain ATCC 700802 / V583)).